Consider the following 123-residue polypeptide: Ribosome-binding factor A (123 aa).

Belongs to the RbfA family. As to quaternary structure, monomer. Binds 30S ribosomal subunits, but not 50S ribosomal subunits or 70S ribosomes.

Its subcellular location is the cytoplasm. In terms of biological role, one of several proteins that assist in the late maturation steps of the functional core of the 30S ribosomal subunit. Associates with free 30S ribosomal subunits (but not with 30S subunits that are part of 70S ribosomes or polysomes). Required for efficient processing of 16S rRNA. May interact with the 5'-terminal helix region of 16S rRNA. The sequence is that of Ribosome-binding factor A from Chlamydia trachomatis serovar L2 (strain ATCC VR-902B / DSM 19102 / 434/Bu).